Reading from the N-terminus, the 646-residue chain is Long-chain fatty acid transport protein 1 (646 aa).

Residues 1–13 (MRAPGAGAASVVS) lie on the Extracellular side of the membrane. Residues 14-34 (LALLWLLGLPWTWSAAAALGV) traverse the membrane as a helical segment. Residues 35-646 (YVGSGGWRFL…TRICSGAFAL (612 aa)) lie on the Cytoplasmic side of the membrane. The tract at residues 191–475 (EVSGHLGKSL…YVSESATSKK (285 aa)) is sufficient for oligomerization. 246–257 (YIYTSGTTGLPK) lines the AMP pocket.

This sequence belongs to the ATP-dependent AMP-binding enzyme family. In terms of assembly, self-associates. May function as a homodimer. Interacts with EPRS1; mediates the translocation of SLC27A1 from the cytoplasm to the plasma membrane thereby increasing the uptake of long-chain fatty acids. Interacts with DGAT2 and this interaction is enhanced in the presence of ZFYVE1. Highest levels of expression are detected in muscle and adipose tissue small, intermediate levels in small intestine, and barely detectable in liver. Expressed in brain gray matter.

The protein localises to the cell membrane. The protein resides in the endomembrane system. It is found in the cytoplasm. The enzyme catalyses a fatty acid(in) = a fatty acid(out). It catalyses the reaction (9Z)-octadecenoate(out) = (9Z)-octadecenoate(in). The catalysed reaction is hexadecanoate(out) = hexadecanoate(in). It carries out the reaction (9Z,12Z)-octadecadienoate(out) = (9Z,12Z)-octadecadienoate(in). The enzyme catalyses (5Z,8Z,11Z,14Z)-eicosatetraenoate(out) = (5Z,8Z,11Z,14Z)-eicosatetraenoate(in). It catalyses the reaction a long-chain fatty acid + ATP + CoA = a long-chain fatty acyl-CoA + AMP + diphosphate. The catalysed reaction is (5Z,8Z,11Z,14Z)-eicosatetraenoate + ATP + CoA = (5Z,8Z,11Z,14Z)-eicosatetraenoyl-CoA + AMP + diphosphate. It carries out the reaction a very long-chain fatty acid + ATP + CoA = a very long-chain fatty acyl-CoA + AMP + diphosphate. The enzyme catalyses tetracosanoate + ATP + CoA = tetracosanoyl-CoA + AMP + diphosphate. With respect to regulation, inhibited by Triacsin C. Its function is as follows. Mediates the import of long-chain fatty acids (LCFA) into the cell by facilitating their transport at the plasma membrane. Also functions as an acyl-CoA ligase catalyzing the ATP-dependent formation of fatty acyl-CoA using LCFA and very-long-chain fatty acids (VLCFA) as substrates, which prevents fatty acid efflux from cells and might drive more fatty acid uptake. May act directly as a bona fide transporter, or alternatively, in a cytoplasmic or membrane-associated multimeric protein complex to trap and draw fatty acids towards accumulation. Plays a pivotal role in regulating available LCFA substrates from exogenous sources in tissues undergoing high levels of beta-oxidation or triglyceride synthesis. May be involved in regulation of cholesterol metabolism. Probably involved in fatty acid transport across the blood barrier. In Homo sapiens (Human), this protein is Long-chain fatty acid transport protein 1.